The following is a 146-amino-acid chain: Hemoglobin subunit delta (146 aa).

Positions 2 to 146 (HLTGDEKSAV…VATALAHKYH (145 aa)) constitute a Globin domain. S50 carries the post-translational modification Phosphoserine. Heme b is bound by residues H63 and H92.

It belongs to the globin family. In terms of assembly, heterotetramer of two delta chains and two alpha chains. In terms of tissue distribution, red blood cells.

This chain is Hemoglobin subunit delta (HBD), found in Aotus trivirgatus (Three-striped night monkey).